Here is a 404-residue protein sequence, read N- to C-terminus: Ammonium transporter (404 aa).

9 helical membrane passes run 7-27, 44-64, 96-116, 125-145, 158-178, 227-247, 254-274, 277-297, and 352-372; these read VFMF…ALFY, FSSI…LAFA, LFMM…SGAF, FLLF…HWVW, FAGG…LAIV, INTN…EWII, LGAV…AGFV, FASI…VFSL, and IVAI…IIKI.

Belongs to the ammonia transporter channel (TC 1.A.11.2) family. In terms of assembly, interacts with NrgB for a correct localization of the latter. GlnK-AmtB complex interacts with TnrA.

The protein resides in the cell membrane. Functionally, functions as an ammonium and methylammonium transporter in the absence of glutamine. Required for ammonium utilization at low concentrations or at low pH values, when ammonium is the single nitrogen source. Required for binding of NrgB to the membrane. Interaction between GlnK-AmtB complex and TnrA protects TnrA from proteolytic degradation. The protein is Ammonium transporter of Bacillus subtilis (strain 168).